The primary structure comprises 285 residues: NAD kinase (285 aa).

Asp-66 (proton acceptor) is an active-site residue. NAD(+) contacts are provided by residues 66–67, 137–138, Arg-148, Arg-165, Asp-167, and 178–183; these read DG, ND, and TAYSMS.

The protein belongs to the NAD kinase family. It depends on a divalent metal cation as a cofactor.

The protein localises to the cytoplasm. The enzyme catalyses NAD(+) + ATP = ADP + NADP(+) + H(+). Functionally, involved in the regulation of the intracellular balance of NAD and NADP, and is a key enzyme in the biosynthesis of NADP. Catalyzes specifically the phosphorylation on 2'-hydroxyl of the adenosine moiety of NAD to yield NADP. In Chlorobium phaeobacteroides (strain DSM 266 / SMG 266 / 2430), this protein is NAD kinase.